Reading from the N-terminus, the 405-residue chain is Cysteine desulfurase IscS (405 aa).

Pyridoxal 5'-phosphate contacts are provided by residues 75-76 (AT), N155, Q183, and 203-205 (SGH). K206 is subject to N6-(pyridoxal phosphate)lysine. Position 243 (T243) interacts with pyridoxal 5'-phosphate. The active-site Cysteine persulfide intermediate is C329. Residue C329 coordinates [2Fe-2S] cluster.

Belongs to the class-V pyridoxal-phosphate-dependent aminotransferase family. NifS/IscS subfamily. As to quaternary structure, homodimer. Forms a heterotetramer with IscU, interacts with other sulfur acceptors. The cofactor is pyridoxal 5'-phosphate.

The protein localises to the cytoplasm. It catalyses the reaction (sulfur carrier)-H + L-cysteine = (sulfur carrier)-SH + L-alanine. The protein operates within cofactor biosynthesis; iron-sulfur cluster biosynthesis. Its function is as follows. Master enzyme that delivers sulfur to a number of partners involved in Fe-S cluster assembly, tRNA modification or cofactor biosynthesis. Catalyzes the removal of elemental sulfur atoms from cysteine to produce alanine. Functions as a sulfur delivery protein for Fe-S cluster synthesis onto IscU, an Fe-S scaffold assembly protein, as well as other S acceptor proteins. This Pseudoalteromonas translucida (strain TAC 125) protein is Cysteine desulfurase IscS.